Reading from the N-terminus, the 102-residue chain is Small ribosomal subunit protein bS18 (102 aa).

It belongs to the bacterial ribosomal protein bS18 family. Part of the 30S ribosomal subunit. Forms a tight heterodimer with protein bS6.

Functionally, binds as a heterodimer with protein bS6 to the central domain of the 16S rRNA, where it helps stabilize the platform of the 30S subunit. This Orientia tsutsugamushi (strain Boryong) (Rickettsia tsutsugamushi) protein is Small ribosomal subunit protein bS18.